A 391-amino-acid chain; its full sequence is MAKGKFERTKPHVNIGTIGHVDHGKTSLTAAITKYFGEYKRYDQIDAAPEEKARGITISTAHVEYETANRHYAHVDCPGHADYVKNMITGAAQMDGAILVVSAADGPMPQTREHILLARQVGVPSIVVFLNKVDQVDDAELLELVELEVRELLSKNEFPGDDIPIVKGSALAALEDSNKTIGEDAIRELMAQVDAYIPTPVRPLDKPFLMPIEDVFSISGRGTVVTGRVERGVVKVGEELEIIGIRPTTKTTCTGVEMFRKLLDQGQAGDNIGALLRGVDREGVERGQVLAKPGTVKPHKKFVAEAYILTKDEGGRHTPFFTNYRPQFYFRTTDVTGIVSLPAGTEMVMPGDNITVDVELIVPIAMEEKLRFAIREGGRTVGAGIVVTIKE.

The tr-type G domain occupies 10-201 (KPHVNIGTIG…QVDAYIPTPV (192 aa)). The interval 19 to 26 (GHVDHGKT) is G1. Residue 19–26 (GHVDHGKT) coordinates GTP. Mg(2+) is bound at residue Thr-26. The interval 55–59 (GITIS) is G2. A G3 region spans residues 76–79 (DCPG). Residues 76–80 (DCPGH) and 131–134 (NKVD) each bind GTP. The interval 131–134 (NKVD) is G4. The tract at residues 169-171 (SAL) is G5.

It belongs to the TRAFAC class translation factor GTPase superfamily. Classic translation factor GTPase family. EF-Tu/EF-1A subfamily. As to quaternary structure, monomer.

The protein localises to the cytoplasm. The catalysed reaction is GTP + H2O = GDP + phosphate + H(+). Its function is as follows. GTP hydrolase that promotes the GTP-dependent binding of aminoacyl-tRNA to the A-site of ribosomes during protein biosynthesis. The chain is Elongation factor Tu from Mesorhizobium japonicum (strain LMG 29417 / CECT 9101 / MAFF 303099) (Mesorhizobium loti (strain MAFF 303099)).